Reading from the N-terminus, the 872-residue chain is DNA mismatch repair protein MutS (872 aa).

The segment covering 1–17 (MSISKIESVNAEKQSPV) has biased composition (polar residues). The tract at residues 1–22 (MSISKIESVNAEKQSPVGTEIG) is disordered. Residue 632–639 (GPNMGGKS) coordinates ATP.

The protein belongs to the DNA mismatch repair MutS family.

This protein is involved in the repair of mismatches in DNA. It is possible that it carries out the mismatch recognition step. This protein has a weak ATPase activity. This chain is DNA mismatch repair protein MutS, found in Azoarcus sp. (strain BH72).